The sequence spans 620 residues: Sodium-dependent dopamine transporter (620 aa).

Topologically, residues 1-56 (MSKSKCSVGLMSSVVAPAKEPNAVGPKEVELILVKEQNGVQLTSSTLTNPRQSPVE) are cytoplasmic. The chain crosses the membrane as a discontinuously helical span at residues 57 to 95 (AQDRETWGKKIDFLLSVIGFAVDLANVWRFPYLCYKNGG). Gly-75, Ala-77, Val-78, Asp-79, and Asn-82 together coordinate Na(+). Asp-79 provides a ligand contact to dopamine. 2 consecutive transmembrane segments (helical) span residues 96–127 (GAFL…NREG) and 128–171 (AAGV…FSSF). Dopamine-binding residues include Ser-149 and Gly-153. At 172 to 236 (TTELPWIHCN…SHGIDDLGPP (65 aa)) the chain is on the extracellular side. An intrachain disulfide couples Cys-180 to Cys-189. N-linked (GlcNAc...) asparagine glycans are attached at residues Asn-181, Asn-188, and Asn-205. The next 2 membrane-spanning stretches (helical) occupy residues 237-256 (RWQL…FSLW) and 257-287 (KGVK…GVTL). Residues 288 to 306 (PGAIDGIRAYLSVDFYRLC) are Extracellular-facing. The chain crosses the membrane as a discontinuously helical span at residues 307–335 (EASVWIDAATQVCFSLGVGFGVLIAFSSY). Gln-317 is a binding site for chloride. Phe-320 contributes to the dopamine binding site. Na(+)-binding residues include Ser-321 and Asn-353. Ser-321 is a binding site for chloride. A helical membrane pass occupies residues 336–376 (NKFTNNCYRDAIVTTSINSLTSFSSGFVVFSFLGYMAQKHS). Ser-357 is a chloride binding site. The Extracellular segment spans residues 377–400 (VPIGDVAKDGPGLIFIIYPEAIAT). Transmembrane regions (helical) follow at residues 401–442 (LPLS…QLLH), 443–466 (RHRE…CVTN), and 467–499 (GGIY…AWFY). 3 residues coordinate Na(+): Leu-418, Asp-421, and Ser-422. The dopamine site is built by Ser-422 and Ala-423. At 500-516 (GVGQFSDDIQQMTGQRP) the chain is on the cytoplasmic side. A helical transmembrane segment spans residues 517–542 (SLYWRLCWKLVSPCFLLFVVVVSIVT). Residues 543–553 (FRPPHYGAYIF) are Extracellular-facing. The chain crosses the membrane as a helical span at residues 554–583 (PDWANALGWVIATSSMAMVPIYAAYKFCSL). Residues 561–590 (GWVIATSSMAMVPIYAAYKFCSLPGSFREK) are interaction with TGFB1I1. Residues 584-620 (PGSFREKLAYAIAPEKDRELVDRGEVRQFTLRHWLKV) are Cytoplasmic-facing.

This sequence belongs to the sodium:neurotransmitter symporter (SNF) (TC 2.A.22) family. SLC6A3 subfamily. Monomer. Homooligomer; disulfide-linked. Interacts with PRKCABP and TGFB1I1. Interacts (via N-terminus) with SYNGR3 (via N-terminus). Interacts with SLC18A2. Interacts with TOR1A (ATP-bound); TOR1A regulates SLC6A3 subcellular location. Interacts with alpha-synuclein/SNCA. Interacts with SEPTIN4. In terms of tissue distribution, highly expressed in substantia nigra. Expressed in axonal varicosities in dopaminergic nerve terminals (at protein level). Expressed in the striatum (at protein level).

Its subcellular location is the cell membrane. The protein resides in the cell projection. It localises to the neuron projection. The protein localises to the axon. It catalyses the reaction dopamine(out) + chloride(out) + Na(+)(out) = dopamine(in) + chloride(in) + Na(+)(in). The enzyme catalyses dopamine(out) + chloride(out) + 2 Na(+)(out) = dopamine(in) + chloride(in) + 2 Na(+)(in). The catalysed reaction is (R)-noradrenaline(out) + chloride(out) + Na(+)(out) = (R)-noradrenaline(in) + chloride(in) + Na(+)(in). Inhibited by cocaine, which occupies the same binding site as dopamine. Inhibited by zinc ions. Enhanced by the antibiotic valinomycin. Inhibited by benztropine. Inhibited by GBR 12909 dihydrochloride and amphetamine. Inhibited by mazindol, GBR 12783 dihydrochloride, nomifensine, diclofensine, amfonelic acid, Lu 19005, Win-35428, bupropion and ritalin. In terms of biological role, mediates sodium- and chloride-dependent transport of dopamine. Also mediates sodium- and chloride-dependent transport of norepinephrine (also known as noradrenaline). Regulator of light-dependent retinal hyaloid vessel regression, downstream of OPN5 signaling. This Homo sapiens (Human) protein is Sodium-dependent dopamine transporter (SLC6A3).